A 367-amino-acid polypeptide reads, in one-letter code: UDP-N-acetylglucosamine--N-acetylmuramyl-(pentapeptide) pyrophosphoryl-undecaprenol N-acetylglucosamine transferase (367 aa).

Residues 15-17 (TGG), Asn126, Arg169, Ser197, and Gln298 each bind UDP-N-acetyl-alpha-D-glucosamine.

Belongs to the glycosyltransferase 28 family. MurG subfamily.

The protein localises to the cell inner membrane. The enzyme catalyses di-trans,octa-cis-undecaprenyl diphospho-N-acetyl-alpha-D-muramoyl-L-alanyl-D-glutamyl-meso-2,6-diaminopimeloyl-D-alanyl-D-alanine + UDP-N-acetyl-alpha-D-glucosamine = di-trans,octa-cis-undecaprenyl diphospho-[N-acetyl-alpha-D-glucosaminyl-(1-&gt;4)]-N-acetyl-alpha-D-muramoyl-L-alanyl-D-glutamyl-meso-2,6-diaminopimeloyl-D-alanyl-D-alanine + UDP + H(+). Its pathway is cell wall biogenesis; peptidoglycan biosynthesis. In terms of biological role, cell wall formation. Catalyzes the transfer of a GlcNAc subunit on undecaprenyl-pyrophosphoryl-MurNAc-pentapeptide (lipid intermediate I) to form undecaprenyl-pyrophosphoryl-MurNAc-(pentapeptide)GlcNAc (lipid intermediate II). This chain is UDP-N-acetylglucosamine--N-acetylmuramyl-(pentapeptide) pyrophosphoryl-undecaprenol N-acetylglucosamine transferase, found in Bradyrhizobium sp. (strain BTAi1 / ATCC BAA-1182).